Reading from the N-terminus, the 713-residue chain is Low-density lipoprotein receptor-related protein 10 (713 aa).

The signal sequence occupies residues 1–17; it reads MLSALPLLFLLLGGALA. The Extracellular portion of the chain corresponds to 18-441; sequence RPDRITFPRS…WDCSYALPRK (424 aa). 2 cysteine pairs are disulfide-bonded: Cys29–Cys58 and Cys81–Cys99. The 109-residue stretch at 29–137 folds into the CUB 1 domain; sequence CEAPPAVLSE…QGFLLTYSQD (109 aa). An N-linked (GlcNAc...) asparagine glycan is attached at Asn57. Asn112 is a glycosylation site (N-linked (GlcNAc...) asparagine). The LDL-receptor class A 1 domain maps to 140–176; sequence LCLQEEFQCLNHRCIPAAQRCDGIDACGDGSDEAGCS. 4 cysteine pairs are disulfide-bonded: Cys141–Cys153, Cys148–Cys166, Cys160–Cys175, and Cys193–Cys221. In terms of domain architecture, CUB 2 spans 193–306; it reads CNLTLEDFYG…RGFNATYHVR (114 aa). Asn194 and Asn300 each carry an N-linked (GlcNAc...) asparagine glycan. 3 LDL-receptor class A domains span residues 308–355, 356–398, and 399–435; these read YCLP…EGCP, GCPP…RRCR, and HCQPGNFRCRDEKCVYETWVCDGQPDCTDGSDEWDCS. Disulfide bonds link Cys309–Cys332, Cys316–Cys345, Cys339–Cys354, Cys357–Cys375, Cys364–Cys388, Cys382–Cys397, Cys400–Cys412, Cys407–Cys425, and Cys419–Cys434. Residues 442-462 traverse the membrane as a helical segment; the sequence is VITAAVIGSLVCGLLLVIALG. The Cytoplasmic segment spans residues 463-713; it reads CTCKLYAIRT…VEAEDEPLLA (251 aa). The disordered stretch occupies residues 566-636; the sequence is LLPRTNTPAR…TLPALATVSE (71 aa). Phosphothreonine is present on Thr596. Pro residues predominate over residues 614 to 626; it reads PPLPIKTPIPTPS.

Belongs to the LDLR family. As to expression, highly expressed in heart, lung, liver and liver. Expressed at low level in brain and spleen. Weakly or not expressed in testis and skeletal muscle. In liver, it is expressed in hepatocytes and at higher level in sinusoidal lining. In the kidney, it is expressed in peritubular capillaries. In brain, it is expressed in the epithelium of the choroid plexus ependymal cells of the third ventricle pia matter, and to lesser extent in hippocampal fields CA2 and CA3.

It is found in the membrane. It localises to the coated pit. Functionally, probable receptor, which is involved in the internalization of lipophilic molecules and/or signal transduction. May be involved in the uptake of lipoprotein APOE in liver. The sequence is that of Low-density lipoprotein receptor-related protein 10 (Lrp10) from Mus musculus (Mouse).